The sequence spans 235 residues: Uridylate kinase (235 aa).

Position 9–12 (9–12) interacts with ATP; that stretch reads KLSG. Glycine 51 is a binding site for UMP. Residues glycine 52 and arginine 56 each coordinate ATP. Residues aspartate 71 and 133–140 each bind UMP; that span reads SGNPFFTT. ATP is bound by residues threonine 160, tyrosine 166, and aspartate 169.

This sequence belongs to the UMP kinase family. Homohexamer.

It localises to the cytoplasm. It catalyses the reaction UMP + ATP = UDP + ADP. It functions in the pathway pyrimidine metabolism; CTP biosynthesis via de novo pathway; UDP from UMP (UMPK route): step 1/1. With respect to regulation, inhibited by UTP. Its function is as follows. Catalyzes the reversible phosphorylation of UMP to UDP. The chain is Uridylate kinase from Gloeobacter violaceus (strain ATCC 29082 / PCC 7421).